A 291-amino-acid polypeptide reads, in one-letter code: Bis(5'-nucleosyl)-tetraphosphatase, symmetrical (291 aa).

The protein belongs to the Ap4A hydrolase family.

It catalyses the reaction P(1),P(4)-bis(5'-adenosyl) tetraphosphate + H2O = 2 ADP + 2 H(+). In terms of biological role, hydrolyzes diadenosine 5',5'''-P1,P4-tetraphosphate to yield ADP. The polypeptide is Bis(5'-nucleosyl)-tetraphosphatase, symmetrical (Coxiella burnetii (strain Dugway 5J108-111)).